The primary structure comprises 132 residues: Small ribosomal subunit protein uS8 (132 aa).

As to quaternary structure, part of the 30S ribosomal subunit. Contacts proteins S5 and S12. Post-translationally, a modified and unmodified form exist; the nature of the modification(s) is unknown.

Its function is as follows. One of the primary rRNA binding proteins, it binds directly to 16S rRNA central domain where it helps coordinate assembly of the platform of the 30S subunit. The chain is Small ribosomal subunit protein uS8 from Rhodopseudomonas palustris (strain ATCC BAA-98 / CGA009).